The chain runs to 398 residues: 1-deoxy-D-xylulose 5-phosphate reductoisomerase (398 aa).

NADPH-binding residues include T11, G12, S13, I14, R38, N39, and N125. Position 126 (K126) interacts with 1-deoxy-D-xylulose 5-phosphate. E127 contributes to the NADPH binding site. D151 provides a ligand contact to Mn(2+). Residues S152, E153, S179, and H202 each contribute to the 1-deoxy-D-xylulose 5-phosphate site. A Mn(2+)-binding site is contributed by E153. Residue G208 coordinates NADPH. 1-deoxy-D-xylulose 5-phosphate is bound by residues S215, N220, K221, and E224. Mn(2+) is bound at residue E224.

It belongs to the DXR family. Requires Mg(2+) as cofactor. Mn(2+) serves as cofactor.

The catalysed reaction is 2-C-methyl-D-erythritol 4-phosphate + NADP(+) = 1-deoxy-D-xylulose 5-phosphate + NADPH + H(+). Its pathway is isoprenoid biosynthesis; isopentenyl diphosphate biosynthesis via DXP pathway; isopentenyl diphosphate from 1-deoxy-D-xylulose 5-phosphate: step 1/6. In terms of biological role, catalyzes the NADPH-dependent rearrangement and reduction of 1-deoxy-D-xylulose-5-phosphate (DXP) to 2-C-methyl-D-erythritol 4-phosphate (MEP). This Burkholderia lata (strain ATCC 17760 / DSM 23089 / LMG 22485 / NCIMB 9086 / R18194 / 383) protein is 1-deoxy-D-xylulose 5-phosphate reductoisomerase.